Reading from the N-terminus, the 485-residue chain is 3-isopropylmalate dehydratase large subunit (485 aa).

2 disordered regions span residues 1–20 and 73–92; these read MSDA…QSTG and PERT…RSLP. Residues Cys364, Cys424, and Cys427 each contribute to the [4Fe-4S] cluster site.

This sequence belongs to the aconitase/IPM isomerase family. LeuC type 1 subfamily. Heterodimer of LeuC and LeuD. [4Fe-4S] cluster serves as cofactor.

The catalysed reaction is (2R,3S)-3-isopropylmalate = (2S)-2-isopropylmalate. It functions in the pathway amino-acid biosynthesis; L-leucine biosynthesis; L-leucine from 3-methyl-2-oxobutanoate: step 2/4. Catalyzes the isomerization between 2-isopropylmalate and 3-isopropylmalate, via the formation of 2-isopropylmaleate. The protein is 3-isopropylmalate dehydratase large subunit of Rhodopirellula baltica (strain DSM 10527 / NCIMB 13988 / SH1).